A 270-amino-acid polypeptide reads, in one-letter code: Maximins-S type D (270 aa).

The signal sequence occupies residues 1–18 (MNFNYFILVLFFITSGHA). 2 propeptides span residues 19–35 (KSETREVHQEAENHIKR) and 52–65 (SAEEQNLAEHLVTR). Position 83 is an asparagine amide (asparagine 83). A propeptide spanning residues 87–100 (SAEEQDLAEDLVTR) is cleaved from the precursor. At lysine 118 the chain carries Lysine amide. Positions 122-135 (SAEDQDLAEDLVTR) are excised as a propeptide. Asparagine 153 is modified (asparagine amide). A propeptide spanning residues 157–170 (SAEEQDLAEHLVTR) is cleaved from the precursor. Asparagine amide is present on asparagine 188. The propeptide occupies 192-205 (SAEEQDLVEDLVTR). Lysine 223 bears the Lysine amide mark. A propeptide spanning residues 227-240 (SAEEQDLAEDLVTR) is cleaved from the precursor. At lysine 258 the chain carries Lysine amide. The propeptide occupies 262–270 (SAEQEKDMK).

This sequence belongs to the maximin-S family. Expressed by the skin dorsal glands.

It is found in the secreted. In terms of biological role, maximin-S1 has no antimicrobial activity. Has no hemolytic activity. Its function is as follows. Maximin-S2 has an activity against mycoplasma but has no activity against common Gram-positive and Gram-negative bacteria nor fungi. Has no hemolytic activity. Maximin-S3 has an activity against mycoplasma but has no activity against common Gram-positive and Gram-negative bacteria nor fungi. Has no hemolytic activity. Functionally, maximin-S4 has an activity against mycoplasma but has no activity against common Gram-positive and Gram-negative bacteria nor fungi. Has no hemolytic activity. In terms of biological role, maximin-S5 has an activity against mycoplasma but has no activity against common Gram-positive and Gram-negative bacteria nor fungi. Has no hemolytic activity. This is Maximins-S type D from Bombina maxima (Giant fire-bellied toad).